A 739-amino-acid chain; its full sequence is Sulfate transporter (739 aa).

The tract at residues 1-44 (MSSENKEQHNLSPRDLPEEAYGFPPELPLGAQRGSSTDLRQFEP) is disordered. At Ser12 the chain carries Phosphoserine. 2 consecutive transmembrane segments (helical) span residues 112–132 (MMSG…YSLL) and 137–157 (PIYG…FGTS). The N-linked (GlcNAc...) asparagine glycan is linked to Asn205. The next 2 helical transmembrane spans lie at 227-247 (FMAG…VSVY) and 255-275 (GFVT…LLGL). N-linked (GlcNAc...) asparagine glycosylation occurs at Asn357. A run of 4 helical transmembrane segments spans residues 378–398 (LIPN…AITV), 420–440 (AIGF…SAAL), 455–475 (LSAI…APLF), and 524–544 (LLST…CVIL). The region spanning 568–719 (TYKNLRSKSG…YSLSEAVAFA (152 aa)) is the STAS domain.

It belongs to the SLC26A/SulP transporter (TC 2.A.53) family. Post-translationally, N-glycosylated. As to expression, cartilage and intestine. Expressed in the kidney (at protein level).

It localises to the cell membrane. The protein resides in the apical cell membrane. It catalyses the reaction oxalate(in) + sulfate(out) = oxalate(out) + sulfate(in). The catalysed reaction is sulfate(out) + 2 chloride(in) = sulfate(in) + 2 chloride(out). The enzyme catalyses oxalate(out) + 2 chloride(in) = oxalate(in) + 2 chloride(out). It carries out the reaction bromide(in) + chloride(out) = bromide(out) + chloride(in). It catalyses the reaction nitrate(in) + chloride(out) = nitrate(out) + chloride(in). The catalysed reaction is iodide(in) + chloride(out) = iodide(out) + chloride(in). Sulfate transporter which mediates sulfate uptake into chondrocytes in order to maintain adequate sulfation of proteoglycans which is needed for cartilage development. Mediates electroneutral anion exchange of sulfate ions for oxalate ions, sulfate and oxalate ions for chloride and/or hydroxyl ions and chloride ions for bromide, iodide and nitrate ions. The coupling of sulfate transport to both hydroxyl and chloride ions likely serves to ensure transport at both acidic pH when most sulfate uptake is mediated by sulfate-hydroxide exchange and alkaline pH when most sulfate uptake is mediated by sulfate-chloride exchange. Essential for chondrocyte proliferation, differentiation and cell size expansion. The chain is Sulfate transporter (Slc26a2) from Rattus norvegicus (Rat).